Reading from the N-terminus, the 609-residue chain is UvrABC system protein C (609 aa).

Residues threonine 15–valine 92 enclose the GIY-YIG domain. Residues aspartate 202–leucine 237 enclose the UVR domain.

This sequence belongs to the UvrC family. As to quaternary structure, interacts with UvrB in an incision complex.

The protein localises to the cytoplasm. Its function is as follows. The UvrABC repair system catalyzes the recognition and processing of DNA lesions. UvrC both incises the 5' and 3' sides of the lesion. The N-terminal half is responsible for the 3' incision and the C-terminal half is responsible for the 5' incision. The chain is UvrABC system protein C from Coxiella burnetii (strain CbuG_Q212) (Coxiella burnetii (strain Q212)).